Here is a 1203-residue protein sequence, read N- to C-terminus: Plasma membrane calcium-transporting ATPase 4 (1203 aa).

Topologically, residues Met1 to Thr92 are cytoplasmic. Ser13 carries the post-translational modification Phosphoserine. Residues Phe93–Ala113 form a helical membrane-spanning segment. Residues Ile114 to Ile150 lie on the Extracellular side of the membrane. A helical transmembrane segment spans residues Glu151–Trp171. Residues Ser172–Leu356 lie on the Cytoplasmic side of the membrane. The segment at Asp294–Val319 is disordered. Phosphoserine occurs at positions 328 and 334. A disordered region spans residues Glu330 to Lys349. Residues Ser334–Lys349 are compositionally biased toward basic and acidic residues. Residues Thr357–Leu376 traverse the membrane as a helical segment. Over Ile377–Phe409 the chain is Extracellular. The chain crosses the membrane as a helical span at residues Phe410–Leu427. Residues Ala428 to Ile840 are Cytoplasmic-facing. Asp465 (4-aspartylphosphate intermediate) is an active-site residue. Mg(2+)-binding residues include Asp785 and Asp789. The helical transmembrane segment at Ser841–Ser860 threads the bilayer. Over Gly861–Leu870 the chain is Extracellular. Residues Lys871 to Ala891 form a helical membrane-spanning segment. The Cytoplasmic segment spans residues Thr892 to Leu911. The helical transmembrane segment at Ile912–Leu934 threads the bilayer. Over Val935–Leu952 the chain is Extracellular. A helical transmembrane segment spans residues Asn953–Asn974. The Cytoplasmic portion of the chain corresponds to Glu975–Arg993. Residues Asn994–Gly1015 traverse the membrane as a helical segment. At Gly1016–Thr1025 the chain is on the extracellular side. The helical transmembrane segment at Met1026–Ser1047 threads the bilayer. Residues Ala1048–Val1203 are Cytoplasmic-facing. 2 positions are modified to phosphoserine: Ser1064 and Ser1070. Residues Leu1086 to Gln1103 are calmodulin-binding subdomain A. Thr1102 is subject to Phosphothreonine; by PKC. Phosphoserine is present on Gln1103. Residues Ile1104–Phe1113 are calmodulin-binding subdomain B. Phosphoserine occurs at positions 1114, 1115, 1126, and 1144.

It belongs to the cation transport ATPase (P-type) (TC 3.A.3) family. Type IIB subfamily. As to quaternary structure, interacts with PDZD11. Interacts with SLC35G1 and STIM1. Interacts with calmodulin. In terms of tissue distribution, ubiquitously expressed. Not detected in liver. The highest levels are found in uterus and stomach. Isoform XA is found in uterus, brain, stomach, small intestine, colon and pancreas. Isoform XB is found in uterus, skeletal muscle, lung, kidney, spleen, stomach, small intestine and pancreas. Isoform ZA is found in testis and isoform ZB is found in testis and heart.

Its subcellular location is the cell membrane. The protein resides in the cell projection. It is found in the cilium. It localises to the flagellum membrane. The enzyme catalyses Ca(2+)(in) + ATP + H2O = Ca(2+)(out) + ADP + phosphate + H(+). Its activity is regulated as follows. Activated by calcium/calmodulin. Its function is as follows. Calcium/calmodulin-regulated and magnesium-dependent enzyme that catalyzes the hydrolysis of ATP coupled with the transport of calcium out of the cell. By regulating sperm cell calcium homeostasis, may play a role in sperm motility. The chain is Plasma membrane calcium-transporting ATPase 4 from Rattus norvegicus (Rat).